The primary structure comprises 855 residues: Putative AAA family ATPase R476 (855 aa).

Residues 1–13 (MNKRDFSELKNSE) show a composition bias toward basic and acidic residues. The disordered stretch occupies residues 1–37 (MNKRDFSELKNSESSEESSLVSSTETVRSSKRNKKFH). The segment covering 17-27 (ESSLVSSTETV) has biased composition (low complexity). Residue 610 to 617 (GPPGTGKT) coordinates ATP.

This sequence belongs to the AAA ATPase family.

In Acanthamoeba polyphaga mimivirus (APMV), this protein is Putative AAA family ATPase R476.